Here is a 236-residue protein sequence, read N- to C-terminus: 2-C-methyl-D-erythritol 4-phosphate cytidylyltransferase (236 aa).

This sequence belongs to the IspD/TarI cytidylyltransferase family. IspD subfamily.

The catalysed reaction is 2-C-methyl-D-erythritol 4-phosphate + CTP + H(+) = 4-CDP-2-C-methyl-D-erythritol + diphosphate. It participates in isoprenoid biosynthesis; isopentenyl diphosphate biosynthesis via DXP pathway; isopentenyl diphosphate from 1-deoxy-D-xylulose 5-phosphate: step 2/6. Functionally, catalyzes the formation of 4-diphosphocytidyl-2-C-methyl-D-erythritol from CTP and 2-C-methyl-D-erythritol 4-phosphate (MEP). The protein is 2-C-methyl-D-erythritol 4-phosphate cytidylyltransferase of Pseudomonas savastanoi pv. phaseolicola (strain 1448A / Race 6) (Pseudomonas syringae pv. phaseolicola (strain 1448A / Race 6)).